Reading from the N-terminus, the 188-residue chain is Elongation factor P-like protein (188 aa).

This sequence belongs to the elongation factor P family.

The protein is Elongation factor P-like protein of Vibrio cholerae serotype O1 (strain ATCC 39541 / Classical Ogawa 395 / O395).